Reading from the N-terminus, the 858-residue chain is Elongation factor 2 (858 aa).

Residues 17-362 (ANIRNMSVIA…MITIHLPSPV (346 aa)) enclose the tr-type G domain. Residue 26–33 (AHVDHGKS) participates in GTP binding. The residue at position 54 (T54) is a Phosphothreonine. T57 is subject to Phosphothreonine; by EEF2K. T59 is modified (phosphothreonine). Position 152 is an N6-succinyllysine (K152). Residues 158 to 161 (NKMD) and 216 to 218 (SGL) contribute to the GTP site. K235 carries the post-translational modification N6-acetyllysine. K239 is subject to N6-acetyllysine; alternate. A Glycyl lysine isopeptide (Lys-Gly) (interchain with G-Cter in SUMO1); alternate cross-link involves residue K239. Phosphotyrosine; by CSK is present on Y265. Position 272 is an N6-acetyllysine; alternate (K272). Position 272 is an N6-succinyllysine; alternate (K272). K275 bears the N6-acetyllysine mark. Residue K322 forms a Glycyl lysine isopeptide (Lys-Gly) (interchain with G-Cter in SUMO) linkage. S325 bears the Phosphoserine mark. At Y373 the chain carries Phosphotyrosine; by CSK. Phosphothreonine is present on T435. An N6-acetyllysine mark is found at K439 and K445. S502 carries the phosphoserine modification. Residue K525 is modified to N6,N6,N6-trimethyllysine; by EEF2KMT. K529 is covalently cross-linked (Glycyl lysine isopeptide (Lys-Gly) (interchain with G-Cter in SUMO)). At K572 the chain carries N6-succinyllysine. Phosphoserine; by CDK2 is present on S595. N6-acetyllysine is present on K619. H715 bears the Diphthamide mark.

Belongs to the TRAFAC class translation factor GTPase superfamily. Classic translation factor GTPase family. EF-G/EF-2 subfamily. Binds to 80S ribosomes. Actively translating ribosomes show mutually exclusive binding of eIF5a (EIF5A or EIF5A2) and EEF2/eEF2. Interacts with SERBP1; interaction sequesters EEF2/eEF2 at the A-site of the ribosome, thereby blocking the interaction sites of the mRNA-tRNA complex, promoting ribosome stabilization and hibernation. Interacts with HABP4; interaction takes place at the A-site of hibernating ribosomes and promotes ribosome stabilization. Component of the mRNA surveillance SURF complex, at least composed of ERF1, ERF3 (ERF3A or ERF3B), EEF2, UPF1/RENT1, SMG1, SMG8 and SMG9. Interacts with RBPMS2. In terms of processing, phosphorylation by EF-2 kinase completely inactivates EF-2; it requires prior phosphorylation by CDK2 at Ser-595 during mitotic prometaphase. Phosphorylation by CSK promotes SUMOylation, proteolytic cleavage, and nuclear translocation if the C-terminal fragment. Post-translationally, diphthamide is 2-[3-carboxyamido-3-(trimethyl-ammonio)propyl]histidine. ISGylated. In terms of processing, proteolytically processed at two sites following phosphorylation by CSK. Post-translationally, SUMOylated following phosphorylation by CSK, promotes proteolytic cleavage.

It is found in the cytoplasm. It localises to the nucleus. The enzyme catalyses GTP + H2O = GDP + phosphate + H(+). Catalyzes the GTP-dependent ribosomal translocation step during translation elongation. During this step, the ribosome changes from the pre-translocational (PRE) to the post-translocational (POST) state as the newly formed A-site-bound peptidyl-tRNA and P-site-bound deacylated tRNA move to the P and E sites, respectively. Catalyzes the coordinated movement of the two tRNA molecules, the mRNA and conformational changes in the ribosome. The polypeptide is Elongation factor 2 (EEF2) (Bos taurus (Bovine)).